The sequence spans 284 residues: Small ribosomal subunit protein uS2 (284 aa).

The protein belongs to the universal ribosomal protein uS2 family.

This Mycoplasma genitalium (strain ATCC 33530 / DSM 19775 / NCTC 10195 / G37) (Mycoplasmoides genitalium) protein is Small ribosomal subunit protein uS2 (rpsB).